A 327-amino-acid polypeptide reads, in one-letter code: Fructose-1,6-bisphosphatase class 1 (327 aa).

Positions 84, 103, 105, and 106 each coordinate Mg(2+). Residues 106–109 (DGSS), Asn-198, and Lys-264 each bind substrate. Mg(2+) is bound at residue Glu-270.

It belongs to the FBPase class 1 family. In terms of assembly, homotetramer. It depends on Mg(2+) as a cofactor.

It localises to the cytoplasm. The catalysed reaction is beta-D-fructose 1,6-bisphosphate + H2O = beta-D-fructose 6-phosphate + phosphate. It functions in the pathway carbohydrate biosynthesis; gluconeogenesis. This Psychrobacter cryohalolentis (strain ATCC BAA-1226 / DSM 17306 / VKM B-2378 / K5) protein is Fructose-1,6-bisphosphatase class 1.